The primary structure comprises 219 residues: Adenylate kinase (219 aa).

10–15 is an ATP binding site; that stretch reads GAGKGT. Positions 30–59 are NMP; sequence STGDMLRAAIREGTELGLKAKSVMESGGLV. AMP contacts are provided by residues Thr31, Arg36, 57–59, 85–88, and Gln92; these read GLV and GFPR. The segment at 122 to 159 is LID; sequence GRRQHPASGRVYHIEYNPPKVEGKDDVTGEELVQRPDD. ATP is bound by residues Arg123 and 132-133; that span reads VY. Positions 156 and 167 each coordinate AMP. Residue Arg202 participates in ATP binding.

This sequence belongs to the adenylate kinase family. As to quaternary structure, monomer.

The protein localises to the cytoplasm. The enzyme catalyses AMP + ATP = 2 ADP. It functions in the pathway purine metabolism; AMP biosynthesis via salvage pathway; AMP from ADP: step 1/1. In terms of biological role, catalyzes the reversible transfer of the terminal phosphate group between ATP and AMP. Plays an important role in cellular energy homeostasis and in adenine nucleotide metabolism. The protein is Adenylate kinase of Acinetobacter baylyi (strain ATCC 33305 / BD413 / ADP1).